The chain runs to 482 residues: Putative metallophosphoesterase F40B5.2 (482 aa).

Transmembrane regions (helical) follow at residues 15–35 (MNLK…SIAI), 129–149 (ALMM…YIFL), 156–176 (IAIT…FLLI), and 205–225 (CYHI…GLYT). A divalent metal cation contacts are provided by D256, H258, D288, N319, H421, and H423.

It belongs to the metallophosphoesterase superfamily. LOC643853 family.

It is found in the membrane. The sequence is that of Putative metallophosphoesterase F40B5.2 from Caenorhabditis elegans.